The primary structure comprises 74 residues: Small ribosomal subunit protein bS18 (74 aa).

Belongs to the bacterial ribosomal protein bS18 family. Part of the 30S ribosomal subunit. Forms a tight heterodimer with protein bS6.

Binds as a heterodimer with protein bS6 to the central domain of the 16S rRNA, where it helps stabilize the platform of the 30S subunit. The protein is Small ribosomal subunit protein bS18 of Gloeobacter violaceus (strain ATCC 29082 / PCC 7421).